We begin with the raw amino-acid sequence, 154 residues long: Myoglobin (154 aa).

The region spanning 2–148 is the Globin domain; the sequence is GLSDDEWNHV…FRNDMASKYK (147 aa). Residue H65 coordinates nitrite. H65 provides a ligand contact to O2. H94 contributes to the heme b binding site.

The protein belongs to the globin family. Monomeric.

It is found in the cytoplasm. The protein resides in the sarcoplasm. The catalysed reaction is Fe(III)-heme b-[protein] + nitric oxide + H2O = Fe(II)-heme b-[protein] + nitrite + 2 H(+). It carries out the reaction H2O2 + AH2 = A + 2 H2O. Its function is as follows. Monomeric heme protein which primary function is to store oxygen and facilitate its diffusion within muscle tissues. Reversibly binds oxygen through a pentacoordinated heme iron and enables its timely and efficient release as needed during periods of heightened demand. Depending on the oxidative conditions of tissues and cells, and in addition to its ability to bind oxygen, it also has a nitrite reductase activity whereby it regulates the production of bioactive nitric oxide. Under stress conditions, like hypoxia and anoxia, it also protects cells against reactive oxygen species thanks to its pseudoperoxidase activity. This Chelonia mydas (Green sea-turtle) protein is Myoglobin (MB).